Here is a 340-residue protein sequence, read N- to C-terminus: Phosphoribosylformylglycinamidine cyclo-ligase (340 aa).

It belongs to the AIR synthase family.

It is found in the cytoplasm. The enzyme catalyses 2-formamido-N(1)-(5-O-phospho-beta-D-ribosyl)acetamidine + ATP = 5-amino-1-(5-phospho-beta-D-ribosyl)imidazole + ADP + phosphate + H(+). The protein operates within purine metabolism; IMP biosynthesis via de novo pathway; 5-amino-1-(5-phospho-D-ribosyl)imidazole from N(2)-formyl-N(1)-(5-phospho-D-ribosyl)glycinamide: step 2/2. This chain is Phosphoribosylformylglycinamidine cyclo-ligase, found in Streptococcus sanguinis (strain SK36).